We begin with the raw amino-acid sequence, 277 residues long: Pristinamycin IIA synthase subunit B (277 aa).

As to quaternary structure, heterodimer of two subunits, SnaA and SnaB. It depends on FMN as a cofactor.

In terms of biological role, catalyzes the oxidation of the proline residue of pristinamycin IIB (PIIB) to pristinamycin IIA (PIIA). The chain is Pristinamycin IIA synthase subunit B (snaB) from Streptomyces pristinaespiralis.